We begin with the raw amino-acid sequence, 308 residues long: MTSKLEQLKKITTVVADTGDFDAIARVKPVDATTNPSLLLKAAAIPGYADLLNACVNDCKGDVGLASDRFGVAVGQEILKVIPGRISTEVDARLSFDTEAMLKRAHRLIELYDKAGIGRDRVLIKIASTWEGIRAAEKLEREGIQTNLTLLFSFAQAVACAEAGVFLISPFVGRIYDWYKKATGNDYQGADDPGVQSVTRIYNYYKANDYKTVVMGASFRNLNQIEQLAGCDRLTISPDLIEKLAADTGKLERKLSPGKTGEARQSLNEAQFRWASNEDAMATEKLAEGIRQFARDQEKLEALLAAKL.

Lysine 125 functions as the Schiff-base intermediate with substrate in the catalytic mechanism.

This sequence belongs to the transaldolase family. Type 1 subfamily. As to quaternary structure, homodimer.

It localises to the cytoplasm. The enzyme catalyses D-sedoheptulose 7-phosphate + D-glyceraldehyde 3-phosphate = D-erythrose 4-phosphate + beta-D-fructose 6-phosphate. It participates in carbohydrate degradation; pentose phosphate pathway; D-glyceraldehyde 3-phosphate and beta-D-fructose 6-phosphate from D-ribose 5-phosphate and D-xylulose 5-phosphate (non-oxidative stage): step 2/3. Its function is as follows. Transaldolase is important for the balance of metabolites in the pentose-phosphate pathway. The chain is Transaldolase from Pseudomonas fluorescens (strain ATCC BAA-477 / NRRL B-23932 / Pf-5).